Consider the following 567-residue polypeptide: Amino-acid acetyltransferase, mitochondrial (567 aa).

The N-acetyltransferase domain occupies 392 to 558; sequence KDSPQTNPLH…ARLKEYAKHI (167 aa).

It belongs to the acetyltransferase family.

The protein resides in the mitochondrion. It catalyses the reaction L-glutamate + acetyl-CoA = N-acetyl-L-glutamate + CoA + H(+). Its pathway is amino-acid biosynthesis; L-arginine biosynthesis; N(2)-acetyl-L-ornithine from L-glutamate: step 1/4. N-acetylglutamate synthase involved in arginine biosynthesis. In Vanderwaltozyma polyspora (strain ATCC 22028 / DSM 70294 / BCRC 21397 / CBS 2163 / NBRC 10782 / NRRL Y-8283 / UCD 57-17) (Kluyveromyces polysporus), this protein is Amino-acid acetyltransferase, mitochondrial (ARG2).